Reading from the N-terminus, the 339-residue chain is Phenylalanine--tRNA ligase alpha subunit (339 aa).

Glutamate 247 lines the Mg(2+) pocket.

Belongs to the class-II aminoacyl-tRNA synthetase family. Phe-tRNA synthetase alpha subunit type 1 subfamily. In terms of assembly, tetramer of two alpha and two beta subunits. Requires Mg(2+) as cofactor.

The protein resides in the cytoplasm. It carries out the reaction tRNA(Phe) + L-phenylalanine + ATP = L-phenylalanyl-tRNA(Phe) + AMP + diphosphate + H(+). In Deinococcus radiodurans (strain ATCC 13939 / DSM 20539 / JCM 16871 / CCUG 27074 / LMG 4051 / NBRC 15346 / NCIMB 9279 / VKM B-1422 / R1), this protein is Phenylalanine--tRNA ligase alpha subunit (pheS).